The chain runs to 279 residues: Pantothenate synthetase (279 aa).

26-33 lines the ATP pocket; the sequence is MGNLHEGH. Catalysis depends on H33, which acts as the Proton donor. Q57 lines the (R)-pantoate pocket. Q57 lines the beta-alanine pocket. 144-147 contacts ATP; it reads GKKD. Q150 contacts (R)-pantoate. Residues V173 and 181–184 each bind ATP; that span reads LSSR.

The protein belongs to the pantothenate synthetase family. As to quaternary structure, homodimer.

The protein resides in the cytoplasm. It carries out the reaction (R)-pantoate + beta-alanine + ATP = (R)-pantothenate + AMP + diphosphate + H(+). The protein operates within cofactor biosynthesis; (R)-pantothenate biosynthesis; (R)-pantothenate from (R)-pantoate and beta-alanine: step 1/1. Functionally, catalyzes the condensation of pantoate with beta-alanine in an ATP-dependent reaction via a pantoyl-adenylate intermediate. The sequence is that of Pantothenate synthetase from Burkholderia lata (strain ATCC 17760 / DSM 23089 / LMG 22485 / NCIMB 9086 / R18194 / 383).